A 725-amino-acid polypeptide reads, in one-letter code: LPS-assembly protein LptD (725 aa).

An N-terminal signal peptide occupies residues 1–25; that stretch reads MSLLSKLHLILYICLLLLPLRFVNA.

The protein belongs to the LptD family. As to quaternary structure, component of the lipopolysaccharide transport and assembly complex. Interacts with LptE and LptA.

The protein resides in the cell outer membrane. Its function is as follows. Together with LptE, is involved in the assembly of lipopolysaccharide (LPS) at the surface of the outer membrane. The chain is LPS-assembly protein LptD from Nitrosomonas eutropha (strain DSM 101675 / C91 / Nm57).